We begin with the raw amino-acid sequence, 544 residues long: Chaperonin GroEL (544 aa).

ATP-binding positions include 30 to 33 (TLGP), lysine 51, 87 to 91 (DGTTT), glycine 415, 479 to 481 (NAA), and aspartate 495.

The protein belongs to the chaperonin (HSP60) family. Forms a cylinder of 14 subunits composed of two heptameric rings stacked back-to-back. Interacts with the co-chaperonin GroES.

The protein localises to the cytoplasm. The enzyme catalyses ATP + H2O + a folded polypeptide = ADP + phosphate + an unfolded polypeptide.. Functionally, together with its co-chaperonin GroES, plays an essential role in assisting protein folding. The GroEL-GroES system forms a nano-cage that allows encapsulation of the non-native substrate proteins and provides a physical environment optimized to promote and accelerate protein folding. This is Chaperonin GroEL from Francisella tularensis subsp. mediasiatica (strain FSC147).